A 555-amino-acid polypeptide reads, in one-letter code: E3 ubiquitin-protein ligase ARIH1 (555 aa).

Acidic residues predominate over residues 1–47; sequence MDSDEGYNYEFDEDEECSEEDSGAEEEEDEDDDEPDDDNLDLGEVEL. The disordered stretch occupies residues 1 to 93; sequence MDSDEGYNYE…GGGGGPGHEQ (93 aa). A compositionally biased stretch (gly residues) spans 65-90; the sequence is ETGGGGGSALGPGGGGGGGGGGGGPG. The UBA-like stretch occupies residues 103–151; that stretch reads TAEQILQHMVECIREVNEVIQNPATITRILLSHFNWDKEKLMERYFDGN. K140 carries the N6-acetyllysine modification. The interval 180-391 is TRIAD supradomain; it reads QDMPCQICYL…SAWYNCNRYN (212 aa). C184, C187, C201, H203, C206, C209, C229, C234, C274, C279, C295, C297, C302, C305, H310, C315, C342, and C345 together coordinate Zn(2+). Residues 184 to 234 form an RING-type 1 zinc finger; it reads CQICYLNYPNSYFTGLECGHKFCMQCWSEYLTTKIMEEGMGQTISCPAHGC. The segment at 254–315 adopts an IBR-type zinc-finger fold; that stretch reads LKYQHLITNS…GENWHDPVKC (62 aa). The segment at 342 to 373 adopts an RING-type 2; atypical zinc-finger fold; it reads CPKCHVTIEKDGGCNHMVCRNQNCKAEFCWVC. The active site involves C355. Residues C360, C365, C370, C373, H380, and C387 each contribute to the Zn(2+) site. Residues 406 to 555 are ariadne domain; that stretch reads RAALQRYLFY…EKDLWEYIED (150 aa).

It belongs to the RBR family. Ariadne subfamily. In terms of assembly, interacts (via the first RING-type zinc finger) with UBE2L3. Associates with cullin-RING ubiquitin ligase (CRL) complexes containing CUL1, CUL2 and CUL3. Interacts with neddylated CUL1. Interacts with neddylated CUL2. Interacts with neddylated CUL3. Interacts with neddylated CUL4A.

The protein resides in the cytoplasm. It localises to the nucleus. The protein localises to the cajal body. It carries out the reaction [E2 ubiquitin-conjugating enzyme]-S-ubiquitinyl-L-cysteine + [acceptor protein]-L-lysine = [E2 ubiquitin-conjugating enzyme]-L-cysteine + [acceptor protein]-N(6)-ubiquitinyl-L-lysine.. The protein operates within protein modification; protein ubiquitination. Its activity is regulated as follows. Autoinhibited by the ariadne domain, which masks the second RING-type zinc finger that contains the active site and inhibits the E3 activity. Inhibition is relieved upon binding to neddylated cullin-RING ubiquitin ligase complexes, which activate the E3 ligase activity of ARIH1. Functionally, E3 ubiquitin-protein ligase, which catalyzes ubiquitination of target proteins together with ubiquitin-conjugating enzyme E2 UBE2L3. Acts as an atypical E3 ubiquitin-protein ligase by working together with cullin-RING ubiquitin ligase (CRL) complexes and initiating ubiquitination of CRL substrates: associates with CRL complexes and specifically mediates addition of the first ubiquitin on CRLs targets. The initial ubiquitin is then elongated by CDC34/UBE2R1 and UBE2R2. E3 ubiquitin-protein ligase activity is activated upon binding to neddylated cullin-RING ubiquitin ligase complexes. Plays a role in protein translation in response to DNA damage by mediating ubiquitination of EIF4E2, the consequences of EIF4E2 ubiquitination are however unclear. According to a report, EIF4E2 ubiquitination leads to promote EIF4E2 cap-binding and protein translation arrest. According to another report EIF4E2 ubiquitination leads to its subsequent degradation. Acts as the ligase involved in ISGylation of EIF4E2. In vitro, controls the degradation of the LINC (LInker of Nucleoskeleton and Cytoskeleton) complex member SUN2 and may therefore have a role in the formation and localization of the LINC complex, and as a consequence, may act in nuclear subcellular localization and nuclear morphology. This Bos taurus (Bovine) protein is E3 ubiquitin-protein ligase ARIH1 (ARIH1).